The primary structure comprises 228 residues: UPF0758 protein Gura_4138 (228 aa).

The MPN domain maps to 106–228 (RFTSPSQVFE…FLSFVDRGMM (123 aa)). Zn(2+) is bound by residues His-177, His-179, and Asp-190. Positions 177–190 (HNHPTGDPTPSRED) match the JAMM motif motif.

This sequence belongs to the UPF0758 family.

This Geotalea uraniireducens (strain Rf4) (Geobacter uraniireducens) protein is UPF0758 protein Gura_4138.